The chain runs to 348 residues: Centromere protein N-A (348 aa).

Belongs to the CENP-N/CHL4 family.

The protein resides in the nucleus. Its subcellular location is the chromosome. The protein localises to the centromere. Its function is as follows. Probable component of a centromeric complex involved in assembly of kinetochore proteins, mitotic progression and chromosome segregation. This is Centromere protein N-A (cenpn-a) from Xenopus laevis (African clawed frog).